Reading from the N-terminus, the 359-residue chain is Histidinol-phosphate aminotransferase (359 aa).

Lysine 217 carries the post-translational modification N6-(pyridoxal phosphate)lysine.

It belongs to the class-II pyridoxal-phosphate-dependent aminotransferase family. Histidinol-phosphate aminotransferase subfamily. Homodimer. The cofactor is pyridoxal 5'-phosphate.

The enzyme catalyses L-histidinol phosphate + 2-oxoglutarate = 3-(imidazol-4-yl)-2-oxopropyl phosphate + L-glutamate. Its pathway is amino-acid biosynthesis; L-histidine biosynthesis; L-histidine from 5-phospho-alpha-D-ribose 1-diphosphate: step 7/9. The chain is Histidinol-phosphate aminotransferase from Salmonella heidelberg (strain SL476).